Here is a 501-residue protein sequence, read N- to C-terminus: Phosphatidylinositol 4-kinase type 2-beta (501 aa).

Disordered regions lie at residues 1-30 (MMAE…SSEV) and 65-122 (TELE…NHFP). The segment covering 17–27 (GDSTPETNFLS) has biased composition (polar residues). The segment covering 76 to 88 (ALLLPGPAGSLSP) has biased composition (low complexity). Over residues 99–117 (NMLSSSSDNLASPGNSSGE) the composition is skewed to polar residues. Positions 141-471 (GVFPERISQG…VQMPRVVVER (331 aa)) constitute a PI3K/PI4K catalytic domain. The tract at residues 147–153 (ISQGSSG) is G-loop. ATP-binding residues include Ser154 and Lys169. Positions 174–176 (EPY) are important for substrate binding. Residues 182-195 (KWTKYFHKVCCPCC) are important for interaction with membranes. ATP-binding positions include 278 to 281 (QLFV) and 292 to 293 (RK). An important for interaction with membranes region spans residues 285–293 (HEADFWLRK). The catalytic loop stretch occupies residues 322-330 (RNTDRGNDN). The interval 362 to 382 (AIDNGLAFPFKHPDEWRAYPF) is activation loop. ATP is bound at residue Asp364. Residues 377-386 (WRAYPFHWAW) are important for interaction with membranes.

Belongs to the PI3/PI4-kinase family. Type II PI4K subfamily.

Its subcellular location is the cytoplasm. It is found in the cytosol. The protein localises to the golgi apparatus membrane. The protein resides in the endoplasmic reticulum membrane. It localises to the cell membrane. Its subcellular location is the early endosome membrane. It carries out the reaction a 1,2-diacyl-sn-glycero-3-phospho-(1D-myo-inositol) + ATP = a 1,2-diacyl-sn-glycero-3-phospho-(1D-myo-inositol 4-phosphate) + ADP + H(+). Its function is as follows. Contributes to the overall PI4-kinase activity of the cell. This contribution may be especially significant in plasma membrane, endosomal and Golgi compartments. The phosphorylation of phosphatidylinositol (PI) to PI4P is the first committed step in the generation of phosphatidylinositol 4,5-bisphosphate (PIP2), a precursor of the second messenger inositol 1,4,5-trisphosphate (InsP3). The sequence is that of Phosphatidylinositol 4-kinase type 2-beta (pi4k2b) from Danio rerio (Zebrafish).